Reading from the N-terminus, the 476-residue chain is Glycogen synthase (476 aa).

Lysine 15 contacts ADP-alpha-D-glucose.

Belongs to the glycosyltransferase 1 family. Bacterial/plant glycogen synthase subfamily.

The enzyme catalyses [(1-&gt;4)-alpha-D-glucosyl](n) + ADP-alpha-D-glucose = [(1-&gt;4)-alpha-D-glucosyl](n+1) + ADP + H(+). It participates in glycan biosynthesis; glycogen biosynthesis. In terms of biological role, synthesizes alpha-1,4-glucan chains using ADP-glucose. In Streptococcus agalactiae serotype III (strain NEM316), this protein is Glycogen synthase.